The sequence spans 713 residues: Glutamine--fructose-6-phosphate aminotransferase [isomerizing] (713 aa).

Catalysis depends on Cys-2, which acts as the For GATase activity. The region spanning Cys-2 to Gly-316 is the Glutamine amidotransferase type-2 domain. 2 consecutive SIS domains span residues Trp-389 to Ser-528 and Cys-561 to Pro-703.

As to quaternary structure, homotetramer.

It catalyses the reaction D-fructose 6-phosphate + L-glutamine = D-glucosamine 6-phosphate + L-glutamate. Its pathway is nucleotide-sugar biosynthesis; UDP-N-acetyl-alpha-D-glucosamine biosynthesis; alpha-D-glucosamine 6-phosphate from D-fructose 6-phosphate: step 1/1. In terms of biological role, involved in amino sugar synthesis (formation of chitin, supplies the amino sugars of asparagine-linked oligosaccharides of glycoproteins). This Candida albicans (strain SC5314 / ATCC MYA-2876) (Yeast) protein is Glutamine--fructose-6-phosphate aminotransferase [isomerizing] (GFA1).